The sequence spans 255 residues: Large ribosomal subunit protein uL4 (255 aa).

Belongs to the universal ribosomal protein uL4 family. In terms of assembly, part of the 50S ribosomal subunit.

One of the primary rRNA binding proteins, this protein initially binds near the 5'-end of the 23S rRNA. It is important during the early stages of 50S assembly. It makes multiple contacts with different domains of the 23S rRNA in the assembled 50S subunit and ribosome. In terms of biological role, forms part of the polypeptide exit tunnel. The sequence is that of Large ribosomal subunit protein uL4 from Thermococcus gammatolerans (strain DSM 15229 / JCM 11827 / EJ3).